The sequence spans 218 residues: Tubulin polymerization-promoting protein (218 aa).

The interval 1 to 46 (MADSKAKPAKAANKTPPKSPGDPARAAKRLSLESEGANEGATAAPE) is disordered. The tract at residues 1-115 (MADSKAKPAK…SCRTITFEQF (115 aa)) is mediates interaction with LIMK1. Threonine 15 is subject to Phosphothreonine. Residues serine 19, serine 31, and serine 34 each carry the phosphoserine modification. The residue at position 42 (threonine 42) is a Phosphothreonine. Positions 60, 71, 79, and 82 each coordinate Zn(2+). Threonine 91 carries the phosphothreonine modification. Position 106 is a phosphoserine (serine 106). The O-linked (GlcNAc) serine glycan is linked to serine 151. 2 positions are modified to phosphoserine: serine 158 and serine 159. Positions 166–192 (TDTSKFTGSHKERFDQSGKGKGKAGRV) are disordered. Over residues 174–183 (SHKERFDQSG) the composition is skewed to basic and acidic residues.

Belongs to the TPPP family. As to quaternary structure, homodimer. Binds tubulin; binding is inhibited by GTP. Interacts with MAPK1. Interacts with GAPDH; the interaction is direct. Interacts with LIMK1 (via the PDZ domain); the interaction is direct. Interacts with LIMK2. Interacts with HDAC6; thereby inhibiting the tubulin deacetylase activity of HDAC6. Interacts with aggregated SNCA; may have a pro-aggregatory role in synucleinopathies. Interacts with DYNLL1. Interacts (via C-terminus) with S100A2, S100A6 and S100B; these interactions inhibit TPPP dimerization. It depends on Mg(2+) as a cofactor. Phosphorylated by LIMK1 on serine residues; phosphorylation may alter the tubulin polymerization activity. Phosphorylation by LIMK2, but not LIMK1, regulates astral microtubule organization at early stage of mitosis. Phosphorylation by ROCK1 at Ser-31, Ser-106 and Ser-158 inhibits interaction with HDAC6, resulting in decreased acetylation of tubulin, increased cell motility and entry into S-phase. Phosphorylation by CDK1 inhibits the microtubule polymerizing activity. Post-translationally, degraded by the proteasome; zinc-binding inhibits degradation by the proteasome. As to expression, widely expressed with higher expression in brain (at protein level).

Its subcellular location is the golgi outpost. The protein localises to the cytoplasm. It is found in the cytoskeleton. It localises to the microtubule organizing center. The protein resides in the nucleus. Its subcellular location is the spindle. It catalyses the reaction GTP + H2O = GDP + phosphate + H(+). Functionally, regulator of microtubule dynamics that plays a key role in myelination by promoting elongation of the myelin sheath. Acts as a microtubule nucleation factor in oligodendrocytes: specifically localizes to the postsynaptic Golgi apparatus region, also named Golgi outpost, and promotes microtubule nucleation, an important step for elongation of the myelin sheath. Required for both uniform polarized growth of distal microtubules as well as directing the branching of proximal processes. Shows magnesium-dependent GTPase activity; the role of the GTPase activity is unclear. In addition to microtubule nucleation activity, also involved in microtubule bundling and stabilization of existing microtubules, thereby maintaining the integrity of the microtubule network. Regulates microtubule dynamics by promoting tubulin acetylation: acts by inhibiting the tubulin deacetylase activity of HDAC6. Also regulates cell migration: phosphorylation by ROCK1 inhibits interaction with HDAC6, resulting in decreased acetylation of tubulin and increased cell motility. Plays a role in cell proliferation by regulating the G1/S-phase transition. Involved in astral microtubule organization and mitotic spindle orientation during early stage of mitosis; this process is regulated by phosphorylation by LIMK2. The polypeptide is Tubulin polymerization-promoting protein (Mus musculus (Mouse)).